Consider the following 494-residue polypeptide: Tyrosinase (494 aa).

Cu cation is bound by residues histidine 38, histidine 53, cysteine 64, histidine 224, histidine 228, and histidine 256.

This sequence belongs to the tyrosinase family. It depends on Cu(2+) as a cofactor.

It catalyses the reaction 2 L-dopa + O2 = 2 L-dopaquinone + 2 H2O. It carries out the reaction L-tyrosine + O2 = L-dopaquinone + H2O. This chain is Tyrosinase (mepA), found in Rhizobium meliloti (Ensifer meliloti).